The primary structure comprises 157 residues: Peroxiredoxin Bcp (157 aa).

Residues 3 to 156 (IEIGQKAPDL…ALQTLKDMSE (154 aa)) enclose the Thioredoxin domain. C45 serves as the catalytic Cysteine sulfenic acid (-SOH) intermediate. C45 and C50 form a disulfide bridge.

The protein belongs to the peroxiredoxin family. BCP/PrxQ subfamily. In terms of assembly, monomer.

It catalyses the reaction a hydroperoxide + [thioredoxin]-dithiol = an alcohol + [thioredoxin]-disulfide + H2O. Thiol-specific peroxidase that catalyzes the reduction of hydrogen peroxide and organic hydroperoxides to water and alcohols, respectively. Plays a role in cell protection against oxidative stress by detoxifying peroxides and as sensor of hydrogen peroxide-mediated signaling events. In Bacillus subtilis (strain 168), this protein is Peroxiredoxin Bcp (ygaF).